A 359-amino-acid chain; its full sequence is Alanine racemase, biosynthetic (359 aa).

The active-site Proton acceptor; specific for D-alanine is lysine 34. Lysine 34 is subject to N6-(pyridoxal phosphate)lysine. Arginine 129 contacts substrate. Tyrosine 255 acts as the Proton acceptor; specific for L-alanine in catalysis. Substrate is bound at residue methionine 303.

This sequence belongs to the alanine racemase family. In terms of assembly, monomer but homodimer in the presence of the substrate. Pyridoxal 5'-phosphate serves as cofactor.

The catalysed reaction is L-alanine = D-alanine. It participates in amino-acid biosynthesis; D-alanine biosynthesis; D-alanine from L-alanine: step 1/1. The protein operates within cell wall biogenesis; peptidoglycan biosynthesis. In terms of biological role, catalyzes the interconversion of L-alanine and D-alanine. This Shigella dysenteriae protein is Alanine racemase, biosynthetic (alr).